The primary structure comprises 1079 residues: Electrogenic sodium bicarbonate cotransporter 1 (1079 aa).

Residues 1–62 (MEDEAVLDRG…EKKEKERISE (62 aa)) are required for interaction with AHCYL1. Over 1-466 (MEDEAVLDRG…FASDFYDALN (466 aa)) the chain is Cytoplasmic. Glu21 carries the post-translational modification Phosphoserine. Tyr30 bears the Phosphotyrosine mark. The segment covering 39–52 (YRRRRRHKRKAGHK) has biased composition (basic residues). The segment at 39 to 78 (YRRRRRHKRKAGHKEKKEKERISENYSDKSDVENADESSS) is disordered. Basic and acidic residues predominate over residues 53 to 70 (EKKEKERISENYSDKSDV). A phosphoserine mark is found at Ser61, Ser65, Ser68, Ser223, Ser232, Ser233, and Ser245. Residues 235-266 (SRMFSNPDNGSPAMTHRNLTSSSLNDISDKPE) are disordered. Phosphothreonine is present on residues Thr249 and Thr254. The span at 251–260 (RNLTSSSLND) shows a compositional bias: polar residues. Ser256, Ser257, and Ser262 each carry phosphoserine. A helical membrane pass occupies residues 467–491 (IQALSAILFIYLATVTNAITFGGLL). Over 492–501 (GDATDNMQGV) the chain is Extracellular. A helical membrane pass occupies residues 502–520 (LESFLGTAVSGAIFCLFAG). Gln521 is a topological domain (cytoplasmic). The discontinuously helical transmembrane segment at 522-542 (PLTILSSTGPVLVFERLLFNF) threads the bilayer. The Extracellular portion of the chain corresponds to 543 to 550 (SKDHNFDY). The chain crosses the membrane as a helical span at residues 551–571 (LEFRLWIGLWSAFMCLVLVAT). The Cytoplasmic segment spans residues 572-585 (DASFLVQYFTRFTE). A helical transmembrane segment spans residues 586–609 (EGFSSLISFIFIYDAFKKMIKLAD). Over 610-692 (YYPINSDFKV…GNNCDFVPDI (83 aa)) the chain is Extracellular. The helical transmembrane segment at 693–710 (TLMSFILFLGTYTSSMAM) threads the bilayer. The Cytoplasmic segment spans residues 711–725 (KKFKTSRYFPTTARK). A helical membrane pass occupies residues 726-745 (LISDFAIILSILIFCVIDAL). Residues 746–779 (VGVDTPKLIVPSEFKPTSPNRGWFVPPFGGNPWW) lie on the Extracellular side of the membrane. Residues 748 to 779 (VDTPKLIVPSEFKPTSPNRGWFVPPFGGNPWW) form an interaction with CA4 region. Residues 780 to 807 (VCLAAAIPALLVTILIFMDQQITAVIVN) traverse the membrane as a helical segment. The Cytoplasmic portion of the chain corresponds to 808 to 819 (RKEHKLKKGAGY). A helical membrane pass occupies residues 820-836 (HLDLFWVAILMVVCSFM). A topological domain (extracellular) is located at residue Ala837. Residues 838–855 (LPWYVAATVISIAHIDSL) traverse the membrane as a discontinuously helical segment. Residues 856-877 (KMETETSAPGEQPKFLGVREQR) lie on the Cytoplasmic side of the membrane. A helical membrane pass occupies residues 878–894 (VTGTLVFILTGLSVFMA). The Extracellular portion of the chain corresponds to 895–901 (PILKFIP). Residues 902-918 (MPVLYGVFLYMGVASLN) form a helical membrane-spanning segment. The Cytoplasmic segment spans residues 919-960 (GVQFMDRLKLLLMPLKHQPDFIYLRHVPLRRVHLFTFLQVLC). The discontinuously helical intramembrane region spans 961–986 (LALLWILKSTVAAIIFPVMILALVAV). The Cytoplasmic portion of the chain corresponds to 987 to 1079 (RKGMDYLFSQ…STFLERHTSC (93 aa)). Residues 1002 to 1004 (LDD) are CA2-binding. The segment at 1012-1079 (KKKEDEKKKK…STFLERHTSC (68 aa)) is disordered. Residues Ser1026 and Ser1029 each carry the phosphoserine modification. Residues 1030–1033 (DNDD) are CA2-binding. A phosphoserine mark is found at Ser1034 and Ser1044. The segment at 1057-1059 (FLS) is required for basolateral targeting. Residues 1062–1079 (KPLDRERSSTFLERHTSC) are compositionally biased toward basic and acidic residues. A Phosphoserine modification is found at Ser1069.

Belongs to the anion exchanger (TC 2.A.31) family. Homodimer. Interacts with CA2/carbonic anhydrase 2 and CA4/carbonic anhydrase 4 which may regulate transporter activity. Isoform 1 but not isoform 2 interacts with AHCYL1 (via PEST domain when phosphorylated); the interaction increases SLC4A4 isoform 1 activity. Interacts with AHCYL2. Post-translationally, phosphorylation of Ser-1026 by PKA increases the binding of CA2 and changes the Na(+):HCO3(-) stoichiometry of the transporter from 3:1 to 2:1. Phosphorylated in presence of STK39 and dephosphorylated in presence of PP1 phosphatase; phosphorylation seems to inhibit SLC4A4 activity. In terms of processing, N-glycosylated. May not be necessary for the transporter basic functions. Isoform 1 is specifically expressed in pancreatic ducts and acini. Also expressed in parotid acinar cells and in the colonic crypts.

It localises to the basolateral cell membrane. The protein localises to the cell membrane. The enzyme catalyses 2 hydrogencarbonate(out) + Na(+)(out) = 2 hydrogencarbonate(in) + Na(+)(in). It catalyses the reaction 3 hydrogencarbonate(out) + Na(+)(out) = 3 hydrogencarbonate(in) + Na(+)(in). With respect to regulation, activated by cyclic AMP. Its function is as follows. Electrogenic sodium/bicarbonate cotransporter with a Na(+):HCO3(-) stoichiometry varying from 1:2 to 1:3. May regulate bicarbonate influx/efflux at the basolateral membrane of cells and regulate intracellular pH. The protein is Electrogenic sodium bicarbonate cotransporter 1 (Slc4a4) of Mus musculus (Mouse).